The primary structure comprises 347 residues: Protein RecA (347 aa).

ATP is bound at residue 65 to 72 (GPESSGKT). The disordered stretch occupies residues 325–347 (KLGISDGDVEETEDAPKSLFDEE). Residues 338–347 (DAPKSLFDEE) show a composition bias toward basic and acidic residues.

This sequence belongs to the RecA family.

It is found in the cytoplasm. Functionally, can catalyze the hydrolysis of ATP in the presence of single-stranded DNA, the ATP-dependent uptake of single-stranded DNA by duplex DNA, and the ATP-dependent hybridization of homologous single-stranded DNAs. It interacts with LexA causing its activation and leading to its autocatalytic cleavage. This is Protein RecA from Staphylococcus aureus (strain Mu3 / ATCC 700698).